We begin with the raw amino-acid sequence, 246 residues long: Biosynthetic peptidoglycan transglycosylase (246 aa).

Residues 20–42 traverse the membrane as a helical segment; the sequence is WLRWLMAAPLLFAAASVLQVLIL.

This sequence belongs to the glycosyltransferase 51 family.

It is found in the cell inner membrane. The catalysed reaction is [GlcNAc-(1-&gt;4)-Mur2Ac(oyl-L-Ala-gamma-D-Glu-L-Lys-D-Ala-D-Ala)](n)-di-trans,octa-cis-undecaprenyl diphosphate + beta-D-GlcNAc-(1-&gt;4)-Mur2Ac(oyl-L-Ala-gamma-D-Glu-L-Lys-D-Ala-D-Ala)-di-trans,octa-cis-undecaprenyl diphosphate = [GlcNAc-(1-&gt;4)-Mur2Ac(oyl-L-Ala-gamma-D-Glu-L-Lys-D-Ala-D-Ala)](n+1)-di-trans,octa-cis-undecaprenyl diphosphate + di-trans,octa-cis-undecaprenyl diphosphate + H(+). Its pathway is cell wall biogenesis; peptidoglycan biosynthesis. Peptidoglycan polymerase that catalyzes glycan chain elongation from lipid-linked precursors. The chain is Biosynthetic peptidoglycan transglycosylase from Xanthomonas axonopodis pv. citri (strain 306).